Reading from the N-terminus, the 135-residue chain is Retinol-binding protein 5 (135 aa).

This sequence belongs to the calycin superfamily. Fatty-acid binding protein (FABP) family.

Its subcellular location is the cytoplasm. Functionally, intracellular transport of retinol. This is Retinol-binding protein 5 (RBP5) from Pongo abelii (Sumatran orangutan).